Reading from the N-terminus, the 21-residue chain is uncharacterized protein (21 aa).

This is an uncharacterized protein from Dictyostelium discoideum (Social amoeba).